A 280-amino-acid polypeptide reads, in one-letter code: MAYVTMRELLEAGVHFGHQTRRWNPKMKKYIFGARNGIYIVDLQQTVKMFRDAYDFITDVTAQGKSVLFVGTKKQARDSVYEEANRAETYYVQNRWLGGMLTNFQTIKKTISRFEFLSTIENDGTIEDYPKKERVKMAKERVKLEACIGGISKMKNLPGAIFVIDPKNESIAVKEGKRLGIPIVAVVDTNCDPDDIDYVIPGNDDAIRSIRLFASKIADAAIEGHQRYLEKQNAGSDKDMDEAAFGGSAPVAAAVERTIESDGSDGPVVEMIRRKTIPAE.

The protein belongs to the universal ribosomal protein uS2 family.

The chain is Small ribosomal subunit protein uS2 from Desulforapulum autotrophicum (strain ATCC 43914 / DSM 3382 / VKM B-1955 / HRM2) (Desulfobacterium autotrophicum).